The primary structure comprises 115 residues: Histidine decarboxylase proenzyme (115 aa).

Ser83 is modified (pyruvic acid (Ser)).

As to quaternary structure, the proenzyme is a hexamer of identical pi chains; each pi chain monomer is cleaved to form a small (or beta) chain and a large (or alpha) chain by non-hydrolytic self-catalysis. Pyruvate serves as cofactor.

It carries out the reaction L-histidine + H(+) = histamine + CO2. This Lentilactobacillus buchneri (Lactobacillus buchneri) protein is Histidine decarboxylase proenzyme.